Consider the following 416-residue polypeptide: Enterobactin exporter EntS (416 aa).

Over 1–21 (MNKQSWLLNLSLLKTHPAFRA) the chain is Cytoplasmic. A helical transmembrane segment spans residues 22-42 (VFLARFISIVSLGLLGVAVPV). At 43–55 (QIQMMTHSTWQVG) the chain is on the periplasmic side. Residues 56 to 76 (LSVTLTGGAMFVGLMVGGVLA) traverse the membrane as a helical segment. Over 77 to 83 (DRYERKK) the chain is Cytoplasmic. The helical transmembrane segment at 84 to 104 (VILLARGTCGIGFIGLCLNAL) threads the bilayer. Residues 105 to 109 (LPEPS) are Periplasmic-facing. A helical transmembrane segment spans residues 110 to 130 (LLAIYLLGLWDGFFASLGVTA). Topologically, residues 131–156 (LLAATPALVGRENLMQAGAITMLTVR) are cytoplasmic. Residues 157–177 (LGSVISPMIGGLLLATGGVAW) traverse the membrane as a helical segment. N178 is a topological domain (periplasmic). A helical transmembrane segment spans residues 179–199 (YGLAAAGTFITLLPLLSLPAL). The Cytoplasmic segment spans residues 200–218 (PPPPQPREHPLKSLLAGFR). Residues 219 to 239 (FLLASPLVGGIALLGGLLTMA) traverse the membrane as a helical segment. Residues 240–256 (SAVRVLYPALADNWQMS) lie on the Periplasmic side of the membrane. Residues 257–277 (AAQIGFLYAAIPLGAAIGALT) form a helical membrane-spanning segment. The Cytoplasmic portion of the chain corresponds to 278 to 287 (SGKLAHSARP). Residues 288-307 (GLLMLLSTLGSFLAIGLFGL) form a helical membrane-spanning segment. Over 308–313 (MPMWIL) the chain is Periplasmic. The chain crosses the membrane as a helical span at residues 314–336 (GVVCLALFGWLSAVSSLLQYTML). The Cytoplasmic portion of the chain corresponds to 337–356 (QTQTPEAMLGRINGLWTAQN). The helical transmembrane segment at 357 to 377 (VTGDAIGAALLGGLGAMMTPV) threads the bilayer. Residue A378 is a topological domain, periplasmic. A helical membrane pass occupies residues 379–399 (SASASGFGLLIIGVLLLLVLV). The Cytoplasmic portion of the chain corresponds to 400-416 (ELRRFRQTPPQMTASDS).

This sequence belongs to the major facilitator superfamily. EntS (TC 2.A.1.38) family.

The protein resides in the cell inner membrane. In terms of biological role, component of an export pathway for enterobactin. The chain is Enterobactin exporter EntS from Escherichia coli O7:K1 (strain IAI39 / ExPEC).